The sequence spans 255 residues: NAD kinase (255 aa).

Asp-44 acts as the Proton acceptor in catalysis. Residues 44–45 (DG), His-49, 114–115 (NE), Asp-144, Ala-152, 155–160 (SAYNLS), and Gln-216 contribute to the NAD(+) site.

This sequence belongs to the NAD kinase family. A divalent metal cation serves as cofactor.

The protein localises to the cytoplasm. It carries out the reaction NAD(+) + ATP = ADP + NADP(+) + H(+). Functionally, involved in the regulation of the intracellular balance of NAD and NADP, and is a key enzyme in the biosynthesis of NADP. Catalyzes specifically the phosphorylation on 2'-hydroxyl of the adenosine moiety of NAD to yield NADP. The sequence is that of NAD kinase from Rickettsia bellii (strain OSU 85-389).